Here is a 266-residue protein sequence, read N- to C-terminus: Ribonuclease 3 (266 aa).

Positions 34–158 (IERCQEILGY…VIAALYIDGG (125 aa)) constitute an RNase III domain. Residue Glu72 participates in Mg(2+) binding. The active site involves Asp76. The Mg(2+) site is built by Asp144 and Glu147. Glu147 is a catalytic residue. The DRBM domain maps to 185–254 (NHKSVLQQFA…AANALAELHN (70 aa)).

Belongs to the ribonuclease III family. In terms of assembly, homodimer. The cofactor is Mg(2+).

It localises to the cytoplasm. It catalyses the reaction Endonucleolytic cleavage to 5'-phosphomonoester.. Digests double-stranded RNA. Involved in the processing of primary rRNA transcript to yield the immediate precursors to the large and small rRNAs (23S and 16S). Processes some mRNAs, and tRNAs when they are encoded in the rRNA operon. Processes pre-crRNA and tracrRNA of type II CRISPR loci if present in the organism. This is Ribonuclease 3 from Rhodopirellula baltica (strain DSM 10527 / NCIMB 13988 / SH1).